The following is a 73-amino-acid chain: Large ribosomal subunit protein bL31 (73 aa).

The protein belongs to the bacterial ribosomal protein bL31 family. Type A subfamily. As to quaternary structure, part of the 50S ribosomal subunit.

In terms of biological role, binds the 23S rRNA. This chain is Large ribosomal subunit protein bL31, found in Synechococcus sp. (strain JA-3-3Ab) (Cyanobacteria bacterium Yellowstone A-Prime).